The chain runs to 606 residues: Vitamin B12 transporter BtuB (606 aa).

A signal peptide spans 1–21 (MKKTLLAVALAPLCLPSQVFA). Residues 28–35 (DVMVVTAN) carry the TonB box motif. Residues 40 to 152 (PIKNVIAPIS…IGGVLNIITA (113 aa)) enclose the TBDR plug domain. The region spanning 157-606 (ESVAEVTAGG…SYYATATYKF (450 aa)) is the TBDR beta-barrel domain. The short motif at 589 to 606 (ETYNVQERSYYATATYKF) is the TonB C-terminal box element.

It belongs to the TonB-dependent receptor family. BtuB (TC 1.B.14.3.1) subfamily.

It is found in the cell outer membrane. In terms of biological role, involved in the active translocation of vitamin B12 (cyanocobalamin) across the outer membrane to the periplasmic space. It derives its energy for transport by interacting with the trans-periplasmic membrane protein TonB. The chain is Vitamin B12 transporter BtuB from Photobacterium profundum (strain SS9).